Here is a 1099-residue protein sequence, read N- to C-terminus: Sterol regulatory element-binding protein 2 (1099 aa).

Residues 1–47 (MDASEFMDTMDPSLSELGDEFTLGDIDEMLQFVSNQVDFPDIFEDQM) form a transcriptional activation (acidic) region. Residues 1 to 461 (MDASEFMDTM…SCVGVMDRSR (461 aa)) lie on the Cytoplasmic side of the membrane. A disordered region spans residues 65 to 107 (LTPPHTPVQTSSQTHTQTLTQAHTQTHTQTHTQTRTPPVLQPR). The segment covering 71-100 (PVQTSSQTHTQTLTQAHTQTHTQTHTQTRT) has biased composition (low complexity). Residues 320–370 (ERRTTHNIIEKRYRSSINDKILELRDLVLGNDAKMHKSGVLRKAIDYIKYL) form the bHLH domain. Positions 370 to 391 (LQQVNHKLRQENLTLKMANQKN) are leucine-zipper. A helical transmembrane segment spans residues 462–482 (LLLCALSFLCLSLNPLPSLLG). The Lumenal portion of the chain corresponds to 483 to 513 (AEAPAGSPEVAGHGPTRTLFSLPAQTQSFGA). A helical membrane pass occupies residues 514 to 534 (WLWCVLPFLLVWVVSGVGVVW). Over 535-1099 (GCVRVLYLWE…LSGGTTIAAS (565 aa)) the chain is Cytoplasmic.

It belongs to the SREBP family. As to quaternary structure, forms a tight complex with scap, the SCAP-SREBP complex, in the endoplasmic reticulum membrane. In terms of assembly, homodimer; efficient DNA binding of the soluble transcription factor fragment requires dimerization with another bHLH protein. Processed in the Golgi apparatus, releasing the protein from the membrane. At low cholesterol the SCAP-SREBP complex is recruited into COPII vesicles for export from the endoplasmic reticulum. In the Golgi, complex SREBPs are cleaved sequentially by site-1 (mbtps1, S1P) and site-2 (mbtps2, S2P) protease. The first cleavage by site-1 protease occurs within the luminal loop, the second cleavage by site-2 protease occurs within the first transmembrane domain, releasing the transcription factor from the Golgi membrane.

It is found in the endoplasmic reticulum membrane. The protein resides in the golgi apparatus membrane. Its subcellular location is the cytoplasmic vesicle. The protein localises to the COPII-coated vesicle membrane. It localises to the nucleus. In terms of biological role, precursor of the transcription factor form (Processed sterol regulatory element-binding protein 2), which is embedded in the endoplasmic reticulum membrane. Low sterol concentrations promote processing of this form, releasing the transcription factor form that translocates into the nucleus and activates transcription of genes involved in cholesterol biosynthesis. Functionally, key transcription factor that regulates expression of genes involved in cholesterol biosynthesis. Binds to the sterol regulatory element 1 (SRE-1) (5'-ATCACCCCAC-3'). Has dual sequence specificity binding to both an E-box motif (5'-ATCACGTGA-3') and to SRE-1 (5'-ATCACCCCAC-3'). Regulates transcription of genes related to cholesterol synthesis pathway. Activated by mediated cholesterol efflux, transactivates NOTCH and promotes hematopoietic stem and progenitor cell emergence. The polypeptide is Sterol regulatory element-binding protein 2 (Danio rerio (Zebrafish)).